The chain runs to 572 residues: Excitatory amino acid transporter 2 (572 aa).

Residues 1–11 (MASTEGANNMP) are compositionally biased toward polar residues. Residues 1 to 28 (MASTEGANNMPKQVEVRMHDSHLSSDEP) form a disordered region. Topologically, residues 1 to 44 (MASTEGANNMPKQVEVRMHDSHLSSDEPKHRNLGMRMCDKLGKN) are cytoplasmic. Ser3, Ser21, Ser24, and Ser25 each carry phosphoserine. A compositionally biased stretch (basic and acidic residues) spans 14–28 (VEVRMHDSHLSSDEP). Cys38 is lipidated: S-palmitoyl cysteine. The next 3 helical transmembrane spans lie at 45-64 (LLLSLTVFGVILGAVCGGLL), 88-108 (MLKMLILPLIISSLITGLSGL), and 121-142 (MVYYMSTTIIAAVLGVILVLAI). Residues Asn205 and Asn215 are each glycosylated (N-linked (GlcNAc...) asparagine). Helical transmembrane passes span 235-258 (FKDGMNVLGLIGFFIAFGIAMGKM), 268-295 (FFNILNEIVMKLVIMIMWYSPLGIACLI), and 317-338 (ITVIVGLIIHGGIFLPLIYFVV). Positions 344-374 (FSFFAGIFQAWITALGTASSAGTLPVTFRCL) form an intramembrane region, discontinuously helical. L-aspartate is bound at residue 361-363 (ASS). The chain crosses the membrane as a helical span at residues 384 to 410 (VTRFVLPVGATINMDGTALYEAVAAIF). 3 residues coordinate Na(+): Gly392, Thr394, and Asn396. L-aspartate-binding positions include Thr400, 441 to 445 (IPSAG), Asp474, and Asn481. The discontinuously helical intramembrane region spans 424–457 (IVTVSLTATLASIGAASIPSAGLVTMLLILTAVG). A helical transmembrane segment spans residues 471–492 (WLLDRMRTSVNVVGDSFGAGIV). 2 residues coordinate Na(+): Asn481 and Asp485. Ser505, Ser520, Ser530, and Ser532 each carry phosphoserine. Tyr537 carries the phosphotyrosine modification. Ser542, Ser558, and Ser562 each carry phosphoserine.

It belongs to the dicarboxylate/amino acid:cation symporter (DAACS) (TC 2.A.23) family. SLC1A2 subfamily. In terms of assembly, homotrimer. Interacts with AJUBA. Post-translationally, glycosylated. Palmitoylation at Cys-38 is not required for correct subcellular localization, but is important for glutamate uptake activity. In terms of tissue distribution, detected in brain. Detected in embryonic forebrain, especially in globus pallidus, perirhinal cortex, lateral hypothalamus, hippocampus, and on fimbria and axonal pathways connecting the neocortex, basal ganglia and thalamus (at protein level). Isoform GLT1 is expressed in the brain. Isoforms GLT-1A and GLT-1B are expressed in the liver.

It localises to the cell membrane. The enzyme catalyses K(+)(in) + L-glutamate(out) + 3 Na(+)(out) + H(+)(out) = K(+)(out) + L-glutamate(in) + 3 Na(+)(in) + H(+)(in). The catalysed reaction is K(+)(in) + L-aspartate(out) + 3 Na(+)(out) + H(+)(out) = K(+)(out) + L-aspartate(in) + 3 Na(+)(in) + H(+)(in). It catalyses the reaction D-aspartate(out) + K(+)(in) + 3 Na(+)(out) + H(+)(out) = D-aspartate(in) + K(+)(out) + 3 Na(+)(in) + H(+)(in). In terms of biological role, sodium-dependent, high-affinity amino acid transporter that mediates the uptake of L-glutamate and also L-aspartate and D-aspartate. Functions as a symporter that transports one amino acid molecule together with two or three Na(+) ions and one proton, in parallel with the counter-transport of one K(+) ion. Mediates Cl(-) flux that is not coupled to amino acid transport; this avoids the accumulation of negative charges due to aspartate and Na(+) symport. Essential for the rapid removal of released glutamate from the synaptic cleft, and for terminating the postsynaptic action of glutamate. This chain is Excitatory amino acid transporter 2 (Slc1a2), found in Mus musculus (Mouse).